A 77-amino-acid chain; its full sequence is U14-theraphotoxin-Cg1c (77 aa).

A signal peptide spans 1–21 (MNTSDPPAVLRIAAITLLCTA). Positions 22 to 49 (SESVEQNPLIPFENAVLGSYAKMASEKR) are excised as a propeptide. Cystine bridges form between C50/C64 and C57/C69.

This sequence belongs to the neurotoxin 10 (Hwtx-1) family. 65 (Jztx-21) subfamily. Expressed by the venom gland.

It localises to the secreted. Its function is as follows. Probable ion channel inhibitor. In Chilobrachys guangxiensis (Chinese earth tiger tarantula), this protein is U14-theraphotoxin-Cg1c.